We begin with the raw amino-acid sequence, 226 residues long: Translation initiation factor IF-3 (226 aa).

The interval 195-226 is disordered; that stretch reads FVPLAPLSPEDLIEEPELESESDSDAEPESDN. Positions 205–226 are enriched in acidic residues; sequence DLIEEPELESESDSDAEPESDN.

Belongs to the IF-3 family. Monomer.

It localises to the cytoplasm. In terms of biological role, IF-3 binds to the 30S ribosomal subunit and shifts the equilibrium between 70S ribosomes and their 50S and 30S subunits in favor of the free subunits, thus enhancing the availability of 30S subunits on which protein synthesis initiation begins. The polypeptide is Translation initiation factor IF-3 (Chlorobium chlorochromatii (strain CaD3)).